Here is a 148-residue protein sequence, read N- to C-terminus: uncharacterized protein (148 aa).

Residues 1–21 (MLQNYAIVLGMAVAVAIWYFF) traverse the membrane as a helical segment. A disordered region spans residues 27-61 (APPGPNPPKPDPPKPDPPKMHMPKKKPHWMDPHLT).

The protein resides in the host membrane. This is an uncharacterized protein from Frog virus 3 (isolate Goorha) (FV-3).